Consider the following 70-residue polypeptide: NADH-ubiquinone oxidoreductase chain 3 (70 aa).

Residues 42–62 traverse the membrane as a helical segment; the sequence is FFVITLIFLIFDVEIYLLLPM.

It belongs to the complex I subunit 3 family.

The protein localises to the mitochondrion membrane. The enzyme catalyses a ubiquinone + NADH + 5 H(+)(in) = a ubiquinol + NAD(+) + 4 H(+)(out). In terms of biological role, core subunit of the mitochondrial membrane respiratory chain NADH dehydrogenase (Complex I) that is believed to belong to the minimal assembly required for catalysis. Complex I functions in the transfer of electrons from NADH to the respiratory chain. The immediate electron acceptor for the enzyme is believed to be ubiquinone. The protein is NADH-ubiquinone oxidoreductase chain 3 (ND3) of Artemia salina (Brine shrimp).